We begin with the raw amino-acid sequence, 289 residues long: ATP synthase gamma chain (289 aa).

Belongs to the ATPase gamma chain family. As to quaternary structure, F-type ATPases have 2 components, CF(1) - the catalytic core - and CF(0) - the membrane proton channel. CF(1) has five subunits: alpha(3), beta(3), gamma(1), delta(1), epsilon(1). CF(0) has three main subunits: a, b and c.

The protein localises to the cell inner membrane. In terms of biological role, produces ATP from ADP in the presence of a proton gradient across the membrane. The gamma chain is believed to be important in regulating ATPase activity and the flow of protons through the CF(0) complex. The polypeptide is ATP synthase gamma chain (Histophilus somni (strain 2336) (Haemophilus somnus)).